The sequence spans 223 residues: Kinetochore protein Spc25 (223 aa).

Residues 65 to 115 are a coiled coil; the sequence is LRCGELEKRANFMEELTQELEATKQRNLVMRDQIKQLNVLARQHRNEVMES.

The protein belongs to the SPC25 family. In terms of assembly, component of the Ndc80 complex, which is composed of Ndc80, Nuf2 and Spc25.

The protein resides in the nucleus. It localises to the chromosome. It is found in the centromere. Its subcellular location is the kinetochore. Its function is as follows. Acts as a component of the essential kinetochore-associated Ndc80 complex, which is required for chromosome segregation and spindle checkpoint activity during meiosis and mitosis. Required for kinetochore integrity and the organization of stable microtubule binding sites in the outer plate of the kinetochore. Participates in SAC signaling that responds specifically to disruptions in spindle microtubule dynamics. The NDC80 complex synergistically enhances the affinity of the SKA1 complex for microtubules and may allow the NDC80 complex to track depolymerizing microtubules. The protein is Kinetochore protein Spc25 of Drosophila lutescens (Fruit fly).